The primary structure comprises 581 residues: Eukaryotic translation initiation factor 2A (581 aa).

At M1 the chain carries N-acetylmethionine. A2 bears the N-acetylalanine; in Eukaryotic translation initiation factor 2A, N-terminally processed mark. T5 carries the post-translational modification Phosphothreonine. WD repeat units lie at residues 23–63 (PHFT…NIIN), 125–163 (QKKM…TIAN), and 356–401 (VASD…HKYD). Residues 432-533 (PSEVPSEEPK…SGDPEVDKKI (102 aa)) form a disordered region. The segment covering 494 to 503 (KKAAKQEARS) has biased composition (basic and acidic residues). Phosphoserine is present on residues S503, S513, and S522. Polar residues predominate over residues 514–524 (APRNTVTQSAS). Residues 527–578 (PEVDKKIKNLKKKLKAIEQLKEQAAAGKQLEKNQLEKIQKETALLQELEDLE) are a coiled coil.

It belongs to the WD repeat EIF2A family.

Its function is as follows. Functions in the early steps of protein synthesis of a small number of specific mRNAs. Acts by directing the binding of methionyl-tRNAi to 40S ribosomal subunits. In contrast to the eIF-2 complex, it binds methionyl-tRNAi to 40S subunits in a codon-dependent manner, whereas the eIF-2 complex binds methionyl-tRNAi to 40S subunits in a GTP-dependent manner. The protein is Eukaryotic translation initiation factor 2A (Eif2a) of Mus musculus (Mouse).